A 313-amino-acid chain; its full sequence is tRNA-cytidine(32) 2-sulfurtransferase (313 aa).

A PP-loop motif motif is present at residues 50 to 55; it reads SGGKDS. The [4Fe-4S] cluster site is built by Cys125, Cys128, and Cys216.

The protein belongs to the TtcA family. Homodimer. Requires Mg(2+) as cofactor. The cofactor is [4Fe-4S] cluster.

The protein resides in the cytoplasm. It catalyses the reaction cytidine(32) in tRNA + S-sulfanyl-L-cysteinyl-[cysteine desulfurase] + AH2 + ATP = 2-thiocytidine(32) in tRNA + L-cysteinyl-[cysteine desulfurase] + A + AMP + diphosphate + H(+). It functions in the pathway tRNA modification. Catalyzes the ATP-dependent 2-thiolation of cytidine in position 32 of tRNA, to form 2-thiocytidine (s(2)C32). The sulfur atoms are provided by the cysteine/cysteine desulfurase (IscS) system. The protein is tRNA-cytidine(32) 2-sulfurtransferase of Haemophilus influenzae (strain ATCC 51907 / DSM 11121 / KW20 / Rd).